Reading from the N-terminus, the 85-residue chain is uncharacterized protein (85 aa).

Positions 35-85 (SDKDAPFSTQALTRSKSKRKRSALPVANGLKKPTRSIKRPSRGERLSATTI) are disordered.

This is an uncharacterized protein from Pasteurella multocida (strain Pm70).